The sequence spans 125 residues: Small ribosomal subunit protein uS12m (125 aa).

Disordered regions lie at residues 1 to 29 and 105 to 125; these read MPTK…QCPQ and LGIP…PKSK. The span at 10-23 shows a compositional bias: basic and acidic residues; it reads HGREEKQRTDRTRA.

The protein belongs to the universal ribosomal protein uS12 family.

Its subcellular location is the mitochondrion. In terms of biological role, protein S12 is involved in the translation initiation step. The sequence is that of Small ribosomal subunit protein uS12m (RPS12) from Oryza sativa subsp. japonica (Rice).